The primary structure comprises 154 residues: Urease subunit alpha (154 aa).

A Urease domain is found at 38-154 (GGIDTHIHFI…ADEMDIQVAI (117 aa)). His-43, His-45, and Lys-126 together coordinate Ni(2+). At Lys-126 the chain carries N6-carboxylysine. His-128 is a binding site for substrate.

This sequence belongs to the metallo-dependent hydrolases superfamily. Urease alpha subunit family. As to quaternary structure, heterotrimer of UreA (gamma), UreB (beta) and UreC (alpha) subunits. Three heterotrimers associate to form the active enzyme. Ni cation is required as a cofactor. Post-translationally, carboxylation allows a single lysine to coordinate two nickel ions.

Its subcellular location is the cytoplasm. The enzyme catalyses urea + 2 H2O + H(+) = hydrogencarbonate + 2 NH4(+). Its pathway is nitrogen metabolism; urea degradation; CO(2) and NH(3) from urea (urease route): step 1/1. The sequence is that of Urease subunit alpha (ureC) from Photobacterium damselae subsp. damselae (Listonella damsela).